The primary structure comprises 365 residues: Aminomethyltransferase (365 aa).

The protein belongs to the GcvT family. The glycine cleavage system is composed of four proteins: P, T, L and H.

It carries out the reaction N(6)-[(R)-S(8)-aminomethyldihydrolipoyl]-L-lysyl-[protein] + (6S)-5,6,7,8-tetrahydrofolate = N(6)-[(R)-dihydrolipoyl]-L-lysyl-[protein] + (6R)-5,10-methylene-5,6,7,8-tetrahydrofolate + NH4(+). Its function is as follows. The glycine cleavage system catalyzes the degradation of glycine. The sequence is that of Aminomethyltransferase from Aeromonas salmonicida (strain A449).